The following is a 730-amino-acid chain: Neuroligin-like protein glit-1 (730 aa).

A signal peptide spans Met-1–Ser-18. Residues Gln-19 to Gly-663 are Extracellular-facing. Asn-103, Asn-320, Asn-445, Asn-512, Asn-557, Asn-564, and Asn-604 each carry an N-linked (GlcNAc...) asparagine glycan. A helical transmembrane segment spans residues Val-664–Trp-684. The Cytoplasmic segment spans residues Gly-685–Leu-730.

The protein belongs to the type-B carboxylesterase/lipase family. As to expression, expressed in the pharynx, intestine, and in several cells in the head including dopaminergic neurons.

The protein resides in the cell membrane. In terms of biological role, probable neuronal cell surface protein thought to be involved in cell-cell-interactions. Confers protection against oxidative stress. Plays a role in protecting dopaminergic neurons against oxidative stress-induced neurodegeneration. The protein is Neuroligin-like protein glit-1 of Caenorhabditis elegans.